Reading from the N-terminus, the 117-residue chain is Ig kappa chain V region 12F2 (117 aa).

The N-terminal stretch at 1–6 (LPGARC) is a signal peptide. Residues 7 to 29 (AYDMTQTPASVEVAVGGTVTIKC) form a framework-1 region. Cys29 and Cys86 are joined by a disulfide. A complementarity-determining-1 region spans residues 30–40 (QASQSISTYLS). The tract at residues 41 to 55 (WYQQKPGQRPKLLIY) is framework-2. The interval 56-62 (RASTLAS) is complementarity-determining-2. The interval 63-94 (GVSSRFKGSGSGTEFTLTISGVECADAATYYC) is framework-3. Residues 95 to 106 (QQGWSSSNVENV) form a complementarity-determining-3 region. Residues 107-116 (FGGGTEVVVK) are framework-4.

In Oryctolagus cuniculus (Rabbit), this protein is Ig kappa chain V region 12F2.